We begin with the raw amino-acid sequence, 523 residues long: WD repeat-containing protein YPL247C (523 aa).

Positions 1–64 are disordered; it reads MDPFHNGNKR…TTNGGNSKRN (64 aa). Positions 9 to 40 are enriched in polar residues; that stretch reads KRSSISFGSSQRQPYNKNNYLSGTNGPSSAAQ. Position 47 is a phosphoserine (Ser-47). Positions 52-64 are enriched in low complexity; the sequence is SGNTTNGGNSKRN. Ser-65 is modified (phosphoserine). WD repeat units follow at residues 173-213, 241-281, 285-325, and 392-432; these read DVVY…RQFQ, GTFP…YVKT, AHDS…HSTI, and GHGS…MEIN. Positions 436–472 are disordered; sequence SKSPSIHGTSLEDPDGDTEMTDGGAGSGLNEDPLSLN.

Belongs to the WD repeat WDR68 family.

Its subcellular location is the cytoplasm. It localises to the nucleus. In Saccharomyces cerevisiae (strain ATCC 204508 / S288c) (Baker's yeast), this protein is WD repeat-containing protein YPL247C.